The primary structure comprises 201 residues: Putative tRNA-binding protein YtpR (201 aa).

The 111-residue stretch at 90–200 (VDLSPKFVVG…GDYEAGDAFQ (111 aa)) folds into the tRNA-binding domain.

This Bacillus subtilis (strain 168) protein is Putative tRNA-binding protein YtpR (ytpR).